A 469-amino-acid polypeptide reads, in one-letter code: E3 ubiquitin-protein ligase pellino homolog 3 (469 aa).

The tract at residues 1–39 is disordered; it reads MVLEGNPEVGSPRTSDLQHRGNKGSCVLSSPGEDAQPGE. Position 11 is a phosphoserine (Ser11).

It belongs to the pellino family. As to quaternary structure, interacts with TRAF6, MAP3K14 and MAP3K7. Phosphorylated by IRAK1 enhancing its E3 ligase activity. As to expression, highly expressed in brain, heart and testis, and at lower level in kidney, liver, lung, placenta, small intestine, spleen and stomach. Isoform 1 is not expressed in lung.

It catalyses the reaction S-ubiquitinyl-[E2 ubiquitin-conjugating enzyme]-L-cysteine + [acceptor protein]-L-lysine = [E2 ubiquitin-conjugating enzyme]-L-cysteine + N(6)-ubiquitinyl-[acceptor protein]-L-lysine.. The protein operates within protein modification; protein ubiquitination. Its function is as follows. E3 ubiquitin ligase catalyzing the covalent attachment of ubiquitin moieties onto substrate proteins. Involved in the TLR and IL-1 signaling pathways via interaction with the complex containing IRAK kinases and TRAF6. Mediates 'Lys-63'-linked polyubiquitination of IRAK1. Can activate AP1/JUN and ELK1. Acts as a regulator of innate immunity by mediating 'Lys-63'-linked polyubiquitination of RIPK2 downstream of NOD1 and NOD2, thereby transforming RIPK2 into a scaffolding protein for downstream effectors, ultimately leading to activation of the NF-kappa-B and MAP kinases signaling. Catalyzes 'Lys-63'-linked polyubiquitination of RIPK2 in parallel of XIAP. This is E3 ubiquitin-protein ligase pellino homolog 3 from Homo sapiens (Human).